A 565-amino-acid chain; its full sequence is E3 ubiquitin-protein ligase RNF168 (565 aa).

The RING-type zinc-finger motif lies at 16-55 (CGICMEILLEPVTLPCNHTLCNPCFQSTVEKANLCCPFCR). S70 carries the post-translational modification Phosphoserine. The LR motif 1 signature appears at 110–128 (LSEPGELRREYEEEISRVE). S134 carries the phosphoserine modification. A UMI motif motif is present at residues 143–151 (EEYIQRLLA). Disordered stretches follow at residues 150–223 (LAEE…KTFG) and 252–302 (SKET…PQLC). Residues 157 to 179 (EKRQREKRRSEMEEQLRGDEELA) show a composition bias toward basic and acidic residues. The MIU motif 1 signature appears at 168–191 (MEEQLRGDEELARSLSTSINSNYE). Polar residues predominate over residues 181-201 (SLSTSINSNYERNTLASPLSS). At S197 the chain carries Phosphoserine. K210 is covalently cross-linked (Glycyl lysine isopeptide (Lys-Gly) (interchain with G-Cter in SUMO2)). Residues 275–293 (PTLSPQTCLETQEQGSESS) show a composition bias toward polar residues. S413 and S414 each carry phosphoserine. An MIU motif 2 motif is present at residues 438 to 461 (RHKQEEQDRLLALQLQKEVDKEQM). The interval 458–521 (KEQMVPNRQK…TKGDYWEPFK (64 aa)) is disordered. An LR motif 2 motif is present at residues 465–476 (RQKGSPDQYQLR). Positions 466 to 477 (QKGSPDQYQLRT) are enriched in polar residues. Phosphoserine is present on S469. The span at 504-518 (DHSKSPRNTKGDYWE) shows a compositional bias: basic and acidic residues. K525 is covalently cross-linked (Glycyl lysine isopeptide (Lys-Gly) (interchain with G-Cter in SUMO2)).

Belongs to the RNF168 family. In terms of assembly, monomer. Interacts with UBE2N/UBC13. In terms of processing, sumoylated with SUMO1 by PIAS4 in response to double-strand breaks (DSBs). Ubiquitinated.

It is found in the nucleus. The enzyme catalyses S-ubiquitinyl-[E2 ubiquitin-conjugating enzyme]-L-cysteine + [acceptor protein]-L-lysine = [E2 ubiquitin-conjugating enzyme]-L-cysteine + N(6)-ubiquitinyl-[acceptor protein]-L-lysine.. It participates in protein modification; protein ubiquitination. In terms of biological role, E3 ubiquitin-protein ligase required for accumulation of repair proteins to sites of DNA damage. Acts with UBE2N/UBC13 to amplify the RNF8-dependent histone ubiquitination. Recruited to sites of DNA damage at double-strand breaks (DSBs) by binding to ubiquitinated histone H2A and H2AX and amplifies the RNF8-dependent H2A ubiquitination, promoting the formation of 'Lys-63'-linked ubiquitin conjugates. This leads to concentrate ubiquitinated histones H2A and H2AX at DNA lesions to the threshold required for recruitment of TP53BP1 and BRCA1. Also recruited at DNA interstrand cross-links (ICLs) sites and promotes accumulation of 'Lys-63'-linked ubiquitination of histones H2A and H2AX, leading to recruitment of FAAP20 and Fanconi anemia (FA) complex, followed by interstrand cross-link repair. H2A ubiquitination also mediates the ATM-dependent transcriptional silencing at regions flanking DSBs in cis, a mechanism to avoid collision between transcription and repair intermediates. Also involved in class switch recombination in immune system, via its role in regulation of DSBs repair. Following DNA damage, promotes the ubiquitination and degradation of JMJD2A/KDM4A in collaboration with RNF8, leading to unmask H4K20me2 mark and promote the recruitment of TP53BP1 at DNA damage sites. Not able to initiate 'Lys-63'-linked ubiquitination in vitro; possibly due to partial occlusion of the UBE2N/UBC13-binding region. Catalyzes monoubiquitination of 'Lys-13' and 'Lys-15' of nucleosomal histone H2A (H2AK13Ub and H2AK15Ub, respectively). This chain is E3 ubiquitin-protein ligase RNF168, found in Mus musculus (Mouse).